The primary structure comprises 390 residues: Magnesium-protoporphyrin IX monomethyl ester [oxidative] cyclase (390 aa).

The protein belongs to the AcsF family. Fe cation serves as cofactor.

The enzyme catalyses Mg-protoporphyrin IX 13-monomethyl ester + 3 NADPH + 3 O2 + 2 H(+) = 3,8-divinyl protochlorophyllide a + 3 NADP(+) + 5 H2O. The protein operates within porphyrin-containing compound metabolism; chlorophyll biosynthesis (light-independent). Catalyzes the formation of the isocyclic ring in chlorophyll biosynthesis. Mediates the cyclase reaction, which results in the formation of divinylprotochlorophyllide (Pchlide) characteristic of all chlorophylls from magnesium-protoporphyrin IX 13-monomethyl ester (MgPMME). The sequence is that of Magnesium-protoporphyrin IX monomethyl ester [oxidative] cyclase from Prochlorococcus marinus (strain MIT 9312).